We begin with the raw amino-acid sequence, 196 residues long: MAITSKMVKELRDKTAAGMMDCKKALTETDGDMEKAVDLLRQKGLAVAAKRAGRATSEGTIQTYIHGAKIGVMIEVGCETDFVAKNEEFCKFAKDIAMHIAAVNPIAVSREGIPAEVIEREKAIYVQQALDSGKPEAIVEKMVVGKVEKFIGEICLVEQKFVMNPDLTVQDLLNELVAKMGENISIKRFARFQVGA.

Residues 80–83 (TDFV) form an involved in Mg(2+) ion dislocation from EF-Tu region.

It belongs to the EF-Ts family.

The protein localises to the cytoplasm. In terms of biological role, associates with the EF-Tu.GDP complex and induces the exchange of GDP to GTP. It remains bound to the aminoacyl-tRNA.EF-Tu.GTP complex up to the GTP hydrolysis stage on the ribosome. In Desulfotalea psychrophila (strain LSv54 / DSM 12343), this protein is Elongation factor Ts.